The chain runs to 302 residues: Syntaxin-17 (302 aa).

Position 2 is an N-acetylserine (serine 2). The Cytoplasmic portion of the chain corresponds to 2-228 (SEDEEKVKLR…KNLGKAAKYK (227 aa)). The residue at position 41 (lysine 41) is an N6-acetyllysine. A coiled-coil region spans residues 53–123 (EEHINAGRTV…EELKKQFNDE (71 aa)). Phosphotyrosine; by ABL1 is present on tyrosine 157. Residues 162–224 (IPRDQNAAES…EEGTKNLGKA (63 aa)) form the t-SNARE coiled-coil homology domain. A helical transmembrane segment spans residues 229-249 (LAALPVAGALIGGVVGGPIGL). A necessary and sufficient for localization to autophagosome region spans residues 229-275 (LAALPVAGALIGGVVGGPIGLLAGFKVAGIAAALGGGVLGFTGGKLI). The Lumenal portion of the chain corresponds to 250-254 (LAGFK). Residues 255–275 (VAGIAAALGGGVLGFTGGKLI) traverse the membrane as a helical segment. At 276-302 (QRRKQKMMEKLASSCPDLPSQTDKKCS) the chain is on the cytoplasmic side. Residue serine 289 is modified to Phosphoserine. The Endoplasmic reticulum retention signal motif lies at 299–302 (KKCS).

It belongs to the syntaxin family. As to quaternary structure, forms a SNARE complex composed of VAMP8, SNAP29 and STX17 involved in fusion of autophagosome with lysosome. May interact with VTI1B. Probably interacts with BET1, SCFD1 and SEC22B. Interacts with PTPN2 and ABL1; involved in STX17 phosphorylation. Interacts with COPB1. Interacts with TMED9 and TMED10; the interaction is direct. Interacts with VAMP7. Interacts with RUBCNL/PACER; promoting targeting of RUBCNL/PACER to autophagosome. Interacts with VAMP8, SNAP29, VPS39 and VPS41; these interactions are increased in the absence of TMEM39A. Interacts with IRGM; promoting STX17 recruitment to autophagosomes. Interacts with ATG8 proteins GABARAP and MAP1LC3B. Interacts with RNF115; this interaction enhances STX17 stability which in turn promotes autophagosome maturation. Interacts with RAB39A (GTP-bound); the interaction promotes autophagosome-lysosome membrane fusion driven by STX17-SNAP29-VAMP8. Interacts with RAB39B; the interaction may promote a different fonction in autophagy as compared with RAB39A. Phosphorylated at Tyr-157 probably by ABL1. Dephosphorylation by PTPN2; regulates exit from the endoplasmic reticulum.

It is found in the endoplasmic reticulum membrane. Its subcellular location is the smooth endoplasmic reticulum membrane. It localises to the endoplasmic reticulum-Golgi intermediate compartment membrane. The protein localises to the cytoplasmic vesicle. The protein resides in the autophagosome membrane. It is found in the COPII-coated vesicle membrane. Its subcellular location is the cytoplasm. It localises to the cytosol. The protein localises to the mitochondrion membrane. The protein resides in the autolysosome membrane. In terms of biological role, SNAREs, soluble N-ethylmaleimide-sensitive factor-attachment protein receptors, are essential proteins for fusion of cellular membranes. SNAREs localized on opposing membranes assemble to form a trans-SNARE complex, an extended, parallel four alpha-helical bundle that drives membrane fusion. STX17 is a SNARE of the autophagosome involved in autophagy through the direct control of autophagosome membrane fusion with the lysosome membrane. May also play a role in the early secretory pathway where it may maintain the architecture of the endoplasmic reticulum-Golgi intermediate compartment/ERGIC and Golgi and/or regulate transport between the endoplasmic reticulum, the ERGIC and the Golgi. This Bos taurus (Bovine) protein is Syntaxin-17.